The following is a 342-amino-acid chain: Nucleoid-associated protein Spea_1765 (342 aa).

Belongs to the YejK family.

The protein localises to the cytoplasm. Its subcellular location is the nucleoid. In Shewanella pealeana (strain ATCC 700345 / ANG-SQ1), this protein is Nucleoid-associated protein Spea_1765.